We begin with the raw amino-acid sequence, 598 residues long: Vanadium-dependent bromoperoxidase (598 aa).

Positions 361, 363, 365, 368, and 370 each coordinate Ca(2+). 2 residues coordinate vanadate: lysine 400 and arginine 408. Histidine 480 is a catalytic residue. The vanadate site is built by serine 485, glycine 486, histidine 487, arginine 547, and histidine 553. The active site involves histidine 487.

It belongs to the vanadium-dependent haloperoxidase family. Homododecamer. Requires Ca(2+) as cofactor. The cofactor is vanadate.

It catalyses the reaction RH + Br(-) + H2O2 = RBr + 2 H2O.. Catalyzes the halogenation of organic substrates in the presence of hydrogen peroxide. In Corallina pilulifera (Red coralline alga), this protein is Vanadium-dependent bromoperoxidase.